The primary structure comprises 494 residues: Serine/threonine-protein kinase PBL13 (494 aa).

Cys-4 carries the S-palmitoyl cysteine lipid modification. Residue Thr-65 is modified to Phosphothreonine. The region spanning 76–356 (FSSSNFLGEG…STVVSVLQDI (281 aa)) is the Protein kinase domain. Residues 82-90 (LGEGGFGPV) and Lys-111 contribute to the ATP site. Residue Tyr-156 is modified to Phosphotyrosine. The Proton acceptor role is filled by Asp-206. Residue Ser-210 is modified to Phosphoserine. Position 240 is a phosphoserine; by autocatalysis (Ser-240). A phosphothreonine mark is found at Thr-241 and Thr-246. Tyr-254 is modified (phosphotyrosine). A Phosphoserine; by autocatalysis modification is found at Ser-321. 2 positions are modified to phosphothreonine; by autocatalysis: Thr-323 and Thr-383. Ser-384 carries the phosphoserine; by autocatalysis modification. Phosphothreonine; by autocatalysis is present on residues Thr-395, Thr-398, Thr-406, Thr-413, Thr-421, and Thr-428. Position 429 is a phosphoserine; by autocatalysis (Ser-429). The tract at residues 434–471 (DKTRREVKETSLQNFDKPRNVSTTDNHQKFRSPAHTAR) is disordered. A Phosphothreonine; by autocatalysis modification is found at Thr-443. The span at 443-458 (TSLQNFDKPRNVSTTD) shows a compositional bias: polar residues. Ser-444 and Ser-455 each carry phosphoserine; by autocatalysis. A Phosphothreonine; by autocatalysis modification is found at Thr-456. The segment covering 462 to 471 (KFRSPAHTAR) has biased composition (basic residues). Residue Tyr-481 is modified to Phosphotyrosine; by autocatalysis.

It belongs to the protein kinase superfamily. Ser/Thr protein kinase family. In terms of assembly, interacts with RBHOD. Interaction is disrupted by flagellin-induced immune signaling.

Its subcellular location is the cell membrane. The catalysed reaction is L-seryl-[protein] + ATP = O-phospho-L-seryl-[protein] + ADP + H(+). The enzyme catalyses L-threonyl-[protein] + ATP = O-phospho-L-threonyl-[protein] + ADP + H(+). Functionally, involved in defense responses. Acts as a negative regulator of plant immune responses. The chain is Serine/threonine-protein kinase PBL13 from Arabidopsis thaliana (Mouse-ear cress).